We begin with the raw amino-acid sequence, 208 residues long: Ras-related protein Rab-6A (208 aa).

The residue at position 2 (Ser-2) is an N-acetylserine. Residues Ser-23, Val-24, Gly-25, Lys-26, Thr-27, Ser-28, Asp-39, Asn-40, Tyr-42, and Thr-45 each coordinate GTP. Thr-27 is a Mg(2+) binding site. The Switch 1 signature appears at 32 to 50 (RFMYDSFDNTYQATIGIDF). Residues Thr-45 and Asp-68 each coordinate Mg(2+). Residues 69-88 (TAGQERFRSLIPSYIRDSTV) carry the Switch 2 motif. Gly-71 is a binding site for GTP. Tyr-82 is subject to O-AMP-tyrosine; by Legionella DrrA. GTP is bound by residues Asn-126, Lys-127, Asp-129, Ser-156, Ala-157, and Lys-158. Ser-184 carries the post-translational modification Phosphoserine. S-geranylgeranyl cysteine attachment occurs at residues Cys-206 and Cys-208. Cys-208 carries the post-translational modification Cysteine methyl ester.

The protein belongs to the small GTPase superfamily. Rab family. In terms of assembly, interacts (GTP-bound) with DYNLRB1; the interaction is direct. Interacts with BICD1. Interacts with BICD2; the interaction is direct. Interacts (GTP-bound) with VPS13B. As to quaternary structure, interacts with BICD1. Interacts (GDP-bound) with DYNLRB1; the interaction is direct. Interacts (GTP-bound) with VPS13B. Interacts with BICDL1; leads to its accumulation in the pericentrosomal region. Interacts with SCYL1BP1. Interacts with VSP52. Interacts with RABGAP1. Interacts with GCC2 (via its GRIP domain). Interacts with RAB6IP1 (via its RUN 1 domain). Interacts with TMF1. Interacts with CIMAP3. Interacts (GTP-bound) with APBA1/MINT1 isoform 2, also called Mint1_826, but not with isoform 1. Interacts with RIC1; the interaction is direct with a preference for RAB6A-GDP. Interacts with RGP1; the interaction is direct with a preference for RAB6A-GDP. In terms of assembly, (Microbial infection) Interacts with human cytomegalovirus protein UL32. The cofactor is Mg(2+). In terms of processing, prenylated. As to expression, ubiquitous.

It is found in the golgi apparatus membrane. It localises to the cytoplasmic vesicle. Its subcellular location is the secretory vesicle. The protein resides in the acrosome membrane. It carries out the reaction GTP + H2O = GDP + phosphate + H(+). With respect to regulation, regulated by guanine nucleotide exchange factors (GEFs) which promote the exchange of bound GDP for free GTP. Regulated by GTPase activating proteins (GAPs) which increase the GTP hydrolysis activity. Inhibited by GDP dissociation inhibitors (GDIs). Functionally, the small GTPases Rab are key regulators of intracellular membrane trafficking, from the formation of transport vesicles to their fusion with membranes. Rabs cycle between an inactive GDP-bound form and an active GTP-bound form that is able to recruit to membranes different sets of downstream effectors directly responsible for vesicle formation, movement, tethering and fusion. RAB6A acts as a regulator of COPI-independent retrograde transport from the Golgi apparatus towards the endoplasmic reticulum (ER). Has a low GTPase activity. Recruits VPS13B to the Golgi membrane. Plays a role in neuron projection development. This is Ras-related protein Rab-6A from Homo sapiens (Human).